The chain runs to 490 residues: Bifunctional protein HldE (490 aa).

Residues Met-1–Ser-330 form a ribokinase region. Asn-205–Glu-208 provides a ligand contact to ATP. The active site involves Asp-275. Residues Phe-356–Glu-490 are cytidylyltransferase.

In the N-terminal section; belongs to the carbohydrate kinase PfkB family. This sequence in the C-terminal section; belongs to the cytidylyltransferase family. As to quaternary structure, homodimer.

It carries out the reaction D-glycero-beta-D-manno-heptose 7-phosphate + ATP = D-glycero-beta-D-manno-heptose 1,7-bisphosphate + ADP + H(+). The enzyme catalyses D-glycero-beta-D-manno-heptose 1-phosphate + ATP + H(+) = ADP-D-glycero-beta-D-manno-heptose + diphosphate. Its pathway is nucleotide-sugar biosynthesis; ADP-L-glycero-beta-D-manno-heptose biosynthesis; ADP-L-glycero-beta-D-manno-heptose from D-glycero-beta-D-manno-heptose 7-phosphate: step 1/4. The protein operates within nucleotide-sugar biosynthesis; ADP-L-glycero-beta-D-manno-heptose biosynthesis; ADP-L-glycero-beta-D-manno-heptose from D-glycero-beta-D-manno-heptose 7-phosphate: step 3/4. Functionally, catalyzes the phosphorylation of D-glycero-D-manno-heptose 7-phosphate at the C-1 position to selectively form D-glycero-beta-D-manno-heptose-1,7-bisphosphate. Its function is as follows. Catalyzes the ADP transfer from ATP to D-glycero-beta-D-manno-heptose 1-phosphate, yielding ADP-D-glycero-beta-D-manno-heptose. The protein is Bifunctional protein HldE of Geobacter metallireducens (strain ATCC 53774 / DSM 7210 / GS-15).